A 146-amino-acid polypeptide reads, in one-letter code: Large ribosomal subunit protein uL15 (146 aa).

A disordered region spans residues 1–56 (MKLHELKAAEGANKASKRVGRGTGSGLGKTSGRGQNGQNSRSGGGVRPGFEGGQMP). Composition is skewed to gly residues over residues 21–35 (RGTG…GRGQ) and 42–52 (SGGGVRPGFEG).

It belongs to the universal ribosomal protein uL15 family. In terms of assembly, part of the 50S ribosomal subunit.

In terms of biological role, binds to the 23S rRNA. The protein is Large ribosomal subunit protein uL15 of Clostridium botulinum (strain ATCC 19397 / Type A).